A 673-amino-acid polypeptide reads, in one-letter code: DNA ligase (673 aa).

Residues 32 to 36 (DHVYD), 81 to 82 (SL), and glutamate 111 contribute to the NAD(+) site. Lysine 113 acts as the N6-AMP-lysine intermediate in catalysis. 4 residues coordinate NAD(+): arginine 134, glutamate 171, lysine 286, and lysine 310. Cysteine 404, cysteine 407, cysteine 422, and cysteine 428 together coordinate Zn(2+). Residues 595-673 (NIIDEYKNKT…NEFWKKDNNF (79 aa)) enclose the BRCT domain.

The protein belongs to the NAD-dependent DNA ligase family. LigA subfamily. It depends on Mg(2+) as a cofactor. The cofactor is Mn(2+).

It carries out the reaction NAD(+) + (deoxyribonucleotide)n-3'-hydroxyl + 5'-phospho-(deoxyribonucleotide)m = (deoxyribonucleotide)n+m + AMP + beta-nicotinamide D-nucleotide.. In terms of biological role, DNA ligase that catalyzes the formation of phosphodiester linkages between 5'-phosphoryl and 3'-hydroxyl groups in double-stranded DNA using NAD as a coenzyme and as the energy source for the reaction. It is essential for DNA replication and repair of damaged DNA. In Ureaplasma parvum serovar 3 (strain ATCC 27815 / 27 / NCTC 11736), this protein is DNA ligase.